A 105-amino-acid polypeptide reads, in one-letter code: Met repressor (105 aa).

This sequence belongs to the MetJ family. As to quaternary structure, homodimer.

It localises to the cytoplasm. In terms of biological role, this regulatory protein, when combined with SAM (S-adenosylmethionine) represses the expression of the methionine regulon and of enzymes involved in SAM synthesis. The protein is Met repressor of Shigella boydii serotype 18 (strain CDC 3083-94 / BS512).